The chain runs to 1237 residues: Anion exchange protein 2 (1237 aa).

A disordered region spans residues 1 to 237; sequence MSSAPRRPAS…SYNLQERRRI (237 aa). The Cytoplasmic segment spans residues 1–704; it reads MSSAPRRPAS…DFRDALDPQC (704 aa). 2 stretches are compositionally biased toward basic and acidic residues: residues 37 to 49 and 58 to 75; these read ELHR…RFEE and GGEE…EYHR. Composition is skewed to basic residues over residues 76–85 and 94–110; these read QSSHHIHHPL and RRRK…RRRP. Serine 113, serine 132, serine 144, serine 170, and serine 172 each carry phosphoserine. Positions 120 to 133 are enriched in acidic residues; it reads TIEEGEEDEDEASE. Over residues 137-151 the composition is skewed to low complexity; that stretch reads ARAPTQPSPASTPSS. Over residues 205–215 the composition is skewed to gly residues; it reads GTAGGDDGGAS. Residue serine 239 is modified to Phosphoserine. Residue threonine 253 is modified to Phosphothreonine. Lysine 270 is subject to N6-methyllysine. Positions 286 to 316 are disordered; that stretch reads RKNAKGSVQSGREGREPGPTPRARPRAPHKP. Serine 439 carries the post-translational modification Phosphoserine. Residues 445–466 form a disordered region; that stretch reads SLLGHHHGQGAESDPHVTEPLI. Positions 704–1237 are membrane (anion exchange); sequence CLAAVIFIYF…DEYNEMPMPV (534 aa). A run of 4 helical transmembrane segments spans residues 705–725, 750–770, 792–812, and 822–842; these read LAAV…FGGL, FCLL…LLVF, IGFW…SFLV, and IFAF…LVKI. Topologically, residues 843–893 are extracellular; sequence FQEHPLHGCSVSNSSEADSGDNATWAGTRVTLGLGNGSSAGPAGQGRPRGQ. N-linked (GlcNAc...) asparagine glycans are attached at residues asparagine 855, asparagine 864, and asparagine 878. A helical membrane pass occupies residues 894 to 914; the sequence is PNTALLSLVLMAGTFFIAFFL. Residues 915–929 lie on the Cytoplasmic side of the membrane; that stretch reads RKFKNGRFFPGRVRR. Transmembrane regions (helical) follow at residues 930–950, 985–1005, 1032–1052, 1086–1106, and 1109–1129; these read VIGD…DYSI, FPVW…ILIF, LLLI…WLAA, RVTG…GDLL, and IPLA…LNGI. Residue cysteine 1169 is the site of S-palmitoyl cysteine attachment. The helical transmembrane segment at 1170–1190 threads the bilayer; the sequence is LALLWAVMSTAASLAFPFILI.

It belongs to the anion exchanger (TC 2.A.31) family.

It localises to the apical cell membrane. The protein localises to the basolateral cell membrane. It catalyses the reaction hydrogencarbonate(in) + chloride(out) = hydrogencarbonate(out) + chloride(in). Sodium-independent anion exchanger which mediates the electroneutral exchange of chloride for bicarbonate ions across the cell membrane. Plays an important role in osteoclast differentiation and function. Regulates bone resorption and calpain-dependent actin cytoskeleton organization in osteoclasts via anion exchange-dependent control of pH. Essential for intracellular pH regulation in CD8(+) T-cells upon CD3 stimulation, modulating CD8(+) T-cell response. The chain is Anion exchange protein 2 (SLC4A2) from Equus caballus (Horse).